The primary structure comprises 386 residues: MKTVILALALIVLASSTQADVIATIKKIDQSPFGRTLFDTIYLELQTGDPLDRLLSTLTDLEDRYVAEQKEDDAKNQEYQGACTVDISAFDKDLAESNRKKIELEARLEGQLYPQRSILEGLVAQKKAEVKGYQKDLDELDAQRAEEHEDFEEKVLEHQEATAIIAEARRLFADNIEHGSFIQKGKATKQTHKFTKEVASMIQKHFTTSAKKTAKFQHRKGYSKLFKAFATIASKVEQLADAGAVQKIIDLADELLAKIADSLSLLRFAEDKRVEAYKKSRNFIVISLNVAGSALANATSDLASLNDIIAQVEASLDTTEQRIENVSADRHDRFTQCEEAVQDYQDARAARTSDRDVVSQTIGLVNKELRTLREQLALRQQAGEEI.

A signal peptide spans 1–19 (MKTVILALALIVLASSTQA). Positions 20–48 (DVIATIKKIDQSPFGRTLFDTIYLELQTG) are excised as a propeptide. A coiled-coil region spans residues 51-154 (LDRLLSTLTD…AEEHEDFEEK (104 aa)). Positions 184 to 238 (KGKATKQTHKFTKEVASMIQKHFTTSAKKTAKFQHRKGYSKLFKAFATIASKVEQ) are excised as a propeptide. Residues 293–332 (SALANATSDLASLNDIIAQVEASLDTTEQRIENVSADRHD) adopt a coiled-coil conformation.

The protein belongs to the TMP family.

It localises to the trichocyst. Its function is as follows. Structural protein that crystallize inside the trichocyst matrix. This chain is Trichocyst matrix protein T2-A (T2A), found in Paramecium tetraurelia.